Consider the following 194-residue polypeptide: Acireductone dioxygenase 1 (194 aa).

A disordered region spans residues 1 to 21 (MEAWYMDDSADDQRKPHHRSP). The Fe(2+) site is built by His87, His89, Glu93, and His132. Ni(2+) contacts are provided by His87, His89, Glu93, and His132.

The protein belongs to the acireductone dioxygenase (ARD) family. The cofactor is Fe(2+). Ni(2+) is required as a cofactor.

Its subcellular location is the cytoplasm. The protein resides in the nucleus. It catalyses the reaction 1,2-dihydroxy-5-(methylsulfanyl)pent-1-en-3-one + O2 = 4-methylsulfanyl-2-oxobutanoate + formate + 2 H(+). It carries out the reaction 1,2-dihydroxy-5-(methylsulfanyl)pent-1-en-3-one + O2 = 3-(methylsulfanyl)propanoate + CO + formate + 2 H(+). The protein operates within amino-acid biosynthesis; L-methionine biosynthesis via salvage pathway; L-methionine from S-methyl-5-thio-alpha-D-ribose 1-phosphate: step 5/6. Its function is as follows. Catalyzes 2 different reactions between oxygen and the acireductone 1,2-dihydroxy-3-keto-5-methylthiopentene (DHK-MTPene) depending upon the metal bound in the active site. Fe-containing acireductone dioxygenase (Fe-ARD) produces formate and 2-keto-4-methylthiobutyrate (KMTB), the alpha-ketoacid precursor of methionine in the methionine recycle pathway. Ni-containing acireductone dioxygenase (Ni-ARD) produces methylthiopropionate, carbon monoxide and formate, and does not lie on the methionine recycle pathway. This Physcomitrium patens (Spreading-leaved earth moss) protein is Acireductone dioxygenase 1.